The primary structure comprises 149 residues: Transcriptional repressor NrdR (149 aa).

A zinc finger lies at 3–34; it reads CPFCSATDTKVIDSRLVADGHQVRRRRECVQC. Positions 49–139 constitute an ATP-cone domain; the sequence is PRVVKQDGSR…VYRAFEDVSE (91 aa).

The protein belongs to the NrdR family. Requires Zn(2+) as cofactor.

Its function is as follows. Negatively regulates transcription of bacterial ribonucleotide reductase nrd genes and operons by binding to NrdR-boxes. The sequence is that of Transcriptional repressor NrdR from Shewanella pealeana (strain ATCC 700345 / ANG-SQ1).